Reading from the N-terminus, the 535-residue chain is MVNIILLIVSALIGLILGYALISIRLKSAKEAAELTLLNAEQEAVDIRGKAEVDAEHIKKTAKRESKANRKELLLEAKEEARKYREEIEQEFKSERQELKQLETRLAERSLTLDRKDENLSSKEKVLDSKEQSLTDKSKHIDERQLQVEKLEEEKKAELEKVAAMTIAEAREVILMETENKLTHEIATRIRDAERDIKDRTVKTAKDLLAQAMQRLAGEYVTEQTITSVHLPDDNMKGRIIGREGRNIRTLESLTGIDVIIDDTPEVVILSGFDPIRREIARMTLESLIADGRIHPARIEELVEKNRLEMDNRIREYGEAAAYEIGAPNLHPDLIKIMGRLQFRTSFGQNVLRHSVEVGKLAGILAGELGENVALARRAGFLHDMGKAIDREVEGSHVEIGMEFARKYKEHPVVVNTIASHHGDVEPDSVIAVLVAAADALSSARPGARNESMENYIKRLRDLEEIATSFDGVQNSFALQAGREIRIMVQPEKISDDQVVILSHKVREKIENNLDYPGNIKVTVIREMRAVDYAK.

The chain crosses the membrane as a helical span at residues 4-24 (IILLIVSALIGLILGYALISI). The interval 118–141 (ENLSSKEKVLDSKEQSLTDKSKHI) is disordered. In terms of domain architecture, KH spans 225–285 (TITSVHLPDD…IRREIARMTL (61 aa)). Residues 351–444 (VLRHSVEVGK…VAAADALSSA (94 aa)) enclose the HD domain.

The protein belongs to the RNase Y family.

The protein localises to the cell membrane. In terms of biological role, endoribonuclease that initiates mRNA decay. The sequence is that of Ribonuclease Y from Streptococcus pyogenes serotype M1.